A 2962-amino-acid polypeptide reads, in one-letter code: MSDESELGNQSEMESFNESDSPDEADPDVVIIHDIVHLRASTTGDYSQSEIGKLPEQNTFFLPGRVKRNISSNDSDVIIDEDEIPDGAIRITSDTHFIGSSRGTSELGDFEMDEQEFLNITIEENGNEQELEEHLRNAYRHEEEECFEEEDDIIELPPLPVKPAVKKPRRKLPKHLSIESGSTAKTSKLVAEVVHDHPRPVNYRMKPAVTDDGKVVEQKRTRVTRNIMSHTIPQYHLEGEETEFGRVKESTLSKTIEQYLQAGKLVSPKCDQFREQIVATAVEYDGSVKMLQFENALKKHSGKQKRLKYQTGWWKASKSHYERAVNGYVAMPKTPVLSISDDPVLYKHHSLFPKNQSSELEKINVQLRIRLNSKRQNNDVIPDSSYFVREFLMQKHSISLRMNRSSDLPELFVPPTLECGYFPQDAVTVQQQEHYLMMRFEEAQDEYHNITYRSIAPPVEFQVGTISAKELHKFHRIGRHIHGFFVVWENKFPEYDESGICCPRKRYLVDMFNLICFPLYTEYEQWESRLRVAFDKTIVYNLHLSEILRCNRPVFDFLSKNKSMLQPITLKEIVYLIEQSNMDAKSFAVKFGLRTFYDHGRATSNKDYLSAFLIITGGAKVVTEEIDSERLRVFNSDYMESGVLTSSGDVYTFEFDKIPNNYQISIGCNADGVAEMEQEDVRHELSECSSRITRIIGDSKKPEKIIARPLVKTNQNDGMKFFTRKDLLNYRIKLYDPSYVVPRAKKQIVNEPAKKKPGRKSKTRYDAAMQQNNFEIEGVPSDVDSEFEGYLSDSENVFQKPSKLMRSTSSDSVFIDYQYREKMFLDVSWFHQQKMIDRSLPPLKKRKRKMNRIYHKHSVRYTMLQANGCAFTEMYRCYDKILPCGTKEIARTKNAIRFPHRFRTYNIPQVYGPGDKQLITEVFGVVKDVITRATGFESASIRTANDIAQAVYDANIARRELLENLEPSDNGILPSPAYLAIEMLSHQKMSGRLCLESARKDVQNNVDKMYNDYMDLDPLDKELHFEISQSIRQSKLNESLEEYERNRERQLAKTLKTVPMDKRSQAALARREEKRRESRRKLADKYAEQRRMMASTRRLEKRTTQKQVDPETIQRLRREDEVRKRKRFEEEDRRGMIRRREERVALQEKVDRMLEEGLRLEKVREAERIRQQQEEERIEMETILISRRVREEEEEKMRLERLRKAEREREQERLKREEEEERKRLEQLREAEKLKAEIEKENERKLQEERTRKALELERKIEEIKRVSTLKDMFGPLPIAKENEQTEKDFQILLDDHELTLLTISRDPLNEKYQEARTEFERLDIKSMLLRKAEKLIDVLTIHYDVPIEQTCRYFTSSIESNENRMAVNEQLNKLFENMANCFTFNIQDGENGLQSKRKWDFQFKKCAVFDGVSQSTVNFIEEKMRENTKKKHLATPKTVISIDTSLLKQSLLRSHARFDPDISLYAQNHTANSIGDVTLKMSNYSLDFATQSIHDKELAEKATPKKGPTVRRHIKNLFGSEKVIVRRSLAAGKPASLNSEDSDSEDSREGSPVAEFLPTNPVCSFWKLVVKIENSTTDKEKTELCEDLDKLILRKDDLFSKSLKWMFPLLATFYVLLSNAVLNENEEIISDKNQTGVTKDEILKSTINDLMIIAAYFEEGSRERSNLRKMISMNGFSVVFNRVILFAKKTCTLAKELESNSRSLSGYVIEDLFESLLAEIERTMRQELGSSVRKTGKLERDFEEIVKLIQNEKKLALSHKSHKNDENRRFRLNTVVKWYDAIICHCKEELTQAIVDAFPLNAITKNKETSHVAMENGDDEAMLSDTSDNQMSTTDYQMPKNICRNSEIFPEDAFAKAYAVVRIPSKKERAQMLSVYRKKNAQSGCVENKGLSRMPKFEEPFVDSVWRTIEKRINNMTHSEEKQIKRFIPVSRSHKLNEKVKFYAMVMIQERDSRDTRLFNSKFQDDNLWHCYSKSSLNHEKMESRILQHIEHTVLSKSNFNQMKWSVQCVNGNKKDAIHYFTDLYKYRSESEFRSALSCGKLKFNFKVYTHLWFMGNLLPTSYNPDSHDDKLFVPCSGCTSGDVIIIHKCTCAYHNDTFSDKFIYANTSLPVGIDKVTRLVGRFVCEHGPSSFLILEHCSANVDANIPFESENVEFSAELRIVKRKTMHSQLVKTFAEEHTHLRDASRHRAISTVTLDSSGSGRSTRCEIFEDSPSEDENDENQLDTTRIGRKIDPIIVDSDKAYLIAEGERMALRIKRLLDPELQKFRSKNFVSRSKSVDAPKTSKQKTVIRRSQSVCDLNDVNEYAQKKVRNTKDSFATLFRDHEYSTRRTYEEQLNNELLDVVTTFGGASNVSADKKYNILASILAFEKEVQLVNDKNGELFKTVSNLVQRNSLQHVKGVILAEDNQTLRSTDNTSEVFPESKAVNEYLKFEIYKRKMMVNAKLMADTVKDLKLKHAEYRPFAKLIATYDSIFKFNVYLFEHFLNCISKHVFNPYAIYCEETRPTGTELSKFQLTLKLIETSMPTVLSMLFNTEPLRRQLSELSEIHKKVRSEDLACTIASLCRYAIERIRIPQTADKRLCDFSWLNSAEDHRETVSFIRLTLEHTLPDMKTENEQTRFVEFLKEAEGFHFSYKFVEAQCKTFVRNHGDSKQAFFTAFYNQNEAFYGSLQKFMSNGTIDPKMKLYYQHQAFLRLHNIVKKRSHIITSDDYHRSSDVCKAMLLSEIVSNPKIAQEAYISGSVLDRMYTSLCKIKAKMPLISPSYIGTSLTCFEDELLFSAVREAKVHTDTRVVFRSKSCMRPNEKAGDANFKTCKVTLLVNLETALLSMVFKSRDQSEIDKDDRLDIDILDEEVIKPIIDWNRIFETFIQPTYNTLFSRMEKRERVSILPENPLGRLENYAFTNPNQDKDCQAVLEYIDVASDTDAEESIEDPLDIVEMTLKRALPRSMSPSSKRRRMR.

Disordered regions lie at residues 1 to 28 and 1061 to 1110; these read MSDE…ADPD and DKRS…QVDP. The span at 15 to 27 shows a compositional bias: acidic residues; that stretch reads SFNESDSPDEADP. 2 coiled-coil regions span residues 995-1085 and 1140-1268; these read LESA…LADK and REER…KRVS. Disordered regions lie at residues 1535–1554 and 2198–2227; these read PASL…GSPV and LDSS…NQLD. The segment covering 2212 to 2225 has biased composition (acidic residues); sequence FEDSPSEDENDENQ.

As to quaternary structure, component of the SDC complex, which consists of sdc-1, sdc-2 and sdc-3. Within the complex, interacts with sdc-1 and sdc-3. In terms of tissue distribution, expressed in hermaphrodites (XX), but absent in males (XO) (at protein level).

It localises to the chromosome. Component of the SDC complex that functions in sex determination and in X chromosome dosage compensation specifically in hermaphrodite (XX) animals. Required for the recruitment of the condensin I-like dosage compensation complex to the male sex-determining autosomal gene her-1, thereby contributing to its repression and initiating hermaphrodite sexual development. Plays a central role in X-chromosome recognition and in the recruitment and assembly of the dosage compensation complex and the dosage compensation protein dpy-21 onto the X chromosomes in hermaphrodites, which leads to a reduction of X-linked gene transcription and an equalization of X-linked gene expression between the sexes. May confer protection against toxicity induced by heavy metals such as arsenite. In Caenorhabditis elegans, this protein is Sex determination and dosage compensation protein sdc-2.